Consider the following 576-residue polypeptide: uncharacterized protein (576 aa).

Residues 1 to 8 (MSLSLGAA) lie on the Cytoplasmic side of the membrane. The chain crosses the membrane as a helical span at residues 9–29 (IYIALKPIFKIYTIMLVGYLV). Over 30–45 (AKFDIVSMENAKGISN) the chain is Extracellular. A helical membrane pass occupies residues 46-66 (MVVNAILPCLTFNKIVSNISW). Residues 67–71 (RDIKE) are Cytoplasmic-facing. Residues 72 to 92 (IGVIILSAFILFVLGATGALF) form a helical membrane-spanning segment. At 93–103 (TTFATTVPKKF) the chain is on the extracellular side. The helical transmembrane segment at 104 to 124 (FWGLIFAGFFPNISDLPIAYI) threads the bilayer. At 125 to 141 (QSMGNGSIFTAEEADKG) the chain is on the cytoplasmic side. The helical transmembrane segment at 142 to 162 (VAYSCIFLFIQSFLMMNFGMW) threads the bilayer. Residues 163–400 (RVVGLDFRDT…FIINCLRPAS (238 aa)) lie on the Extracellular side of the membrane. The chain crosses the membrane as a helical span at residues 401–421 (LGAILGIICALIPWVKACFVT). Residues 422 to 437 (TYVHVHKAPDGEPVLN) are Cytoplasmic-facing. Residues 438–458 (FLMDFTEYIGNACVPLGLLLL) traverse the membrane as a helical segment. The Extracellular portion of the chain corresponds to 459–476 (GGTLARLEIKSLPPGFIK). The helical transmembrane segment at 477-497 (SALLMTCFRLIVIPIIGVLWV) threads the bilayer. At 498–512 (NKLYSIDWLDTGIGK) the chain is on the cytoplasmic side. A helical transmembrane segment spans residues 513-533 (FDMILTWSMPSATAQVYFTAF). Residues 534–545 (YTPACGDHIQMN) are Extracellular-facing. Residues 546-566 (CLSVLFVMQYAILFITVAFVV) traverse the membrane as a helical segment. The Cytoplasmic segment spans residues 567 to 576 (TYTLKVDLKV).

Belongs to the auxin efflux carrier (TC 2.A.69) family.

Its subcellular location is the membrane. This is an uncharacterized protein from Saccharomyces cerevisiae (strain ATCC 204508 / S288c) (Baker's yeast).